The chain runs to 910 residues: Short transient receptor potential channel 3 (910 aa).

The tract at residues 1–93 is disordered; sequence MSTKVKKCRE…VRGPAFMFGA (93 aa). Residues 1-448 lie on the Cytoplasmic side of the membrane; the sequence is MSTKVKKCRE…KILRSPFMKF (448 aa). Over residues 19-29 the composition is skewed to acidic residues; that stretch reads PEEEEDGEAEG. The span at 48-58 shows a compositional bias: pro residues; that stretch reads PPCPRAPPSPG. Residues 59–68 show a composition bias toward low complexity; the sequence is PDASSEGSPS. ANK repeat units lie at residues 100-129, 135-164, 166-192, and 221-250; these read AEEE…TLNV, MGQN…LARI, DALL…FAAS, and PDIT…RIER. Position 147 (Glu-147) interacts with Ca(2+). Residues 449-466 traverse the membrane as a helical segment; that stretch reads VAHAASFIIFLGLLVFNA. The Extracellular segment spans residues 467 to 497; it reads SDRFEGITTLPNITVIDYPKQIFRVKTTQFT. N-linked (GlcNAc...) asparagine glycosylation occurs at Asn-478. A helical transmembrane segment spans residues 498 to 516; the sequence is WTEMLIMVWVLGMMWSECK. Residues Glu-514, Glu-517, and Asn-532 each contribute to the Ca(2+) site. Over 517 to 529 the chain is Cytoplasmic; it reads ELWLEGPREYIVQ. Residues 530–551 traverse the membrane as a helical segment; the sequence is LWNVLDFGMLSIFIAAFTARFL. Topologically, residues 552–595 are extracellular; sequence AFLQATKAQQYVDSHVQESDLSEVTLPPEVQYFTYARDKWLPSD. A helical transmembrane segment spans residues 596-619; that stretch reads PQIISEGLYAIAVVLSFSRIAYIL. Over 620–638 the chain is Cytoplasmic; that stretch reads PANESFGPLQISLGRTVKD. One copy of the ANK 5 repeat lies at 623-652; it reads ESFGPLQISLGRTVKDIFKFMVLFIMVFLA. Residues 639 to 662 form a helical membrane-spanning segment; the sequence is IFKFMVLFIMVFLAFMIGMFILYS. Residues 663–702 lie on the Extracellular side of the membrane; that stretch reads YYLGAKVNPAFTTVEESFKTLFWSIFGLSEVTSVVLKYDH. A helical membrane pass occupies residues 703-728; that stretch reads KFIENIGYVLYGIYNVTMVVVLLNML. The Cytoplasmic portion of the chain corresponds to 729 to 910; it reads IAMINSSYQE…KLNPSVLRCE (182 aa). Positions 860, 863, 865, and 872 each coordinate Ca(2+).

Belongs to the transient receptor (TC 1.A.4) family. STrpC subfamily. TRPC3 sub-subfamily. Homotetramer. Interacts with ITPR1, ITPR3, MX1 and RNF24. Interacts with JPH2; the interaction is involved in maintaining Ca(2+) homeostasis in skeletal muscle and is mediated by JPH2 'Ser-165' phosphorylation. As to expression, abundantly expressed in brain. Concentrated in cerebellar Purkinje cells and sparsely localized in cerebellar granule lyer, pontine nuclei and thalamus. Lower levels detected in other tissues.

Its subcellular location is the cell membrane. The catalysed reaction is Ca(2+)(in) = Ca(2+)(out). With respect to regulation, activated by diacylglycerol (DAG) in a membrane-delimited fashion, independently of protein kinase C. Activated by inositol 1,4,5-triphosphate receptors (ITPR) with bound IP3. May be activated by internal calcium store depletion. Inhibited by intracellular Ca(2+). In terms of biological role, forms a receptor-activated non-selective calcium permeant cation channel. May be operated by a phosphatidylinositol second messenger system activated by receptor tyrosine kinases or G-protein coupled receptors. The sequence is that of Short transient receptor potential channel 3 (Trpc3) from Mus musculus (Mouse).